Here is a 266-residue protein sequence, read N- to C-terminus: Undecaprenyl-diphosphatase (266 aa).

Helical transmembrane passes span 1–21 (MDTF…FLPI), 39–59 (QGLS…VIYF), 87–107 (WWII…KDFI), 111–131 (LRSA…LWWA), 149–169 (ALLI…RSGA), 183–203 (AAAR…AILV), 218–238 (ALTL…HYFL), and 246–266 (MTPF…FIFL).

This sequence belongs to the UppP family.

The protein resides in the cell inner membrane. It carries out the reaction di-trans,octa-cis-undecaprenyl diphosphate + H2O = di-trans,octa-cis-undecaprenyl phosphate + phosphate + H(+). Catalyzes the dephosphorylation of undecaprenyl diphosphate (UPP). Confers resistance to bacitracin. The protein is Undecaprenyl-diphosphatase of Shewanella sp. (strain MR-4).